The following is a 65-amino-acid chain: Ubiquinol-cytochrome-c reductase complex assembly factor 6 (65 aa).

At 1–9 the chain is on the mitochondrial matrix side; that stretch reads MPAGVSWPR. A helical; Signal-anchor for type II membrane protein membrane pass occupies residues 10–32; that stretch reads YLRMFAASVLSMFAGAQVVHHYY. Residues 33–65 lie on the Mitochondrial intermembrane side of the membrane; sequence RPDLSIPEIPPKPGELRTELLGLKERQMDSQKQ.

This sequence belongs to the UQCC6 family. As to expression, highly expressed in skeletal and cardiac muscle (at protein level).

Its subcellular location is the mitochondrion inner membrane. In terms of biological role, required for the assembly and stability of the mitochondrial ubiquinol-cytochrome c reductase complex (complex III (CIII) or cytochrome b-c1 complex), a multisubunit transmembrane complex that is part of the mitochondrial electron transport chain (ETC) which drives oxidative phosphorylation. Mediates early complex III biogenesis. Participates in regulating the levels of electron transport chain proteins, and therefore energy supply, in response to changes in energy demand. Also required for cytochrome c oxidase complex (complex IV) assembly. The sequence is that of Ubiquinol-cytochrome-c reductase complex assembly factor 6 (uqcc6) from Danio rerio (Zebrafish).